A 177-amino-acid chain; its full sequence is Probable inosine/xanthosine triphosphatase (177 aa).

The protein belongs to the YjjX NTPase family. As to quaternary structure, homodimer. Requires Mg(2+) as cofactor. Mn(2+) serves as cofactor.

The catalysed reaction is XTP + H2O = XDP + phosphate + H(+). It carries out the reaction ITP + H2O = IDP + phosphate + H(+). Functionally, phosphatase that hydrolyzes non-canonical purine nucleotides such as XTP and ITP to their respective diphosphate derivatives. Probably excludes non-canonical purines from DNA/RNA precursor pool, thus preventing their incorporation into DNA/RNA and avoiding chromosomal lesions. This Pyrobaculum arsenaticum (strain DSM 13514 / JCM 11321 / PZ6) protein is Probable inosine/xanthosine triphosphatase.